We begin with the raw amino-acid sequence, 1023 residues long: Protein FAM13A (1023 aa).

Residues 43-231 enclose the Rho-GAP domain; the sequence is VSLQELERQG…KILENYNTLF (189 aa). The disordered stretch occupies residues 269 to 290; sequence LERDMPKPPPKTKIPKSRSEGS. Residue serine 345 is modified to Phosphoserine. Disordered stretches follow at residues 381-437 and 459-562; these read VNNS…SGFN and CAGE…EVPQ. Residues 384–405 are compositionally biased toward low complexity; sequence SGGQSSEDSESGTLSASSATSA. Basic and acidic residues-rich tracts occupy residues 412–427 and 509–524; these read SKEQ…KGLI and SDER…HTQH. Residues 536–549 are compositionally biased toward polar residues; it reads PSLSDTKQQRNQDA. 2 positions are modified to phosphoserine: serine 597 and serine 617. 2 disordered regions span residues 628–663 and 726–759; these read QYLD…QEDL and ISEE…KKQE. Residues 666–730 are a coiled coil; it reads AQLTRRIQSL…ESKLKISEED (65 aa). Serine 727 is subject to Phosphoserine. A Phosphothreonine modification is found at threonine 732. Residues 738-748 are compositionally biased toward polar residues; sequence RSNTLPKSFGS. Residues 750-759 show a composition bias toward basic and acidic residues; that stretch reads LEKEDEKKQE. Positions 946-978 form a coiled coil; that stretch reads ASIPELLEHLQEMREEKKRIRKKLRDFEDNFFR.

It belongs to the FAM13 family. Isoform 1 is widely expressed, with highest expression in skeletal muscle, thymus, brain and lung. Isoform 3 is less abundant than isoform 1 and predominantly expressed in kidney, pancreas, liver, lung and thymus.

The protein is Protein FAM13A (FAM13A) of Homo sapiens (Human).